Consider the following 224-residue polypeptide: Uracil-DNA glycosylase (224 aa).

Catalysis depends on Asp-61, which acts as the Proton acceptor.

It belongs to the uracil-DNA glycosylase (UDG) superfamily. UNG family.

It localises to the cytoplasm. It carries out the reaction Hydrolyzes single-stranded DNA or mismatched double-stranded DNA and polynucleotides, releasing free uracil.. Functionally, excises uracil residues from the DNA which can arise as a result of misincorporation of dUMP residues by DNA polymerase or due to deamination of cytosine. The protein is Uracil-DNA glycosylase of Mannheimia succiniciproducens (strain KCTC 0769BP / MBEL55E).